Here is a 423-residue protein sequence, read N- to C-terminus: Glucose-1-phosphate adenylyltransferase (423 aa).

Residues Y108, G173, 188 to 189 (EK), and S207 each bind alpha-D-glucose 1-phosphate.

The protein belongs to the bacterial/plant glucose-1-phosphate adenylyltransferase family. As to quaternary structure, homotetramer.

It catalyses the reaction alpha-D-glucose 1-phosphate + ATP + H(+) = ADP-alpha-D-glucose + diphosphate. The protein operates within glycan biosynthesis; glycogen biosynthesis. Its function is as follows. Involved in the biosynthesis of ADP-glucose, a building block required for the elongation reactions to produce glycogen. Catalyzes the reaction between ATP and alpha-D-glucose 1-phosphate (G1P) to produce pyrophosphate and ADP-Glc. The sequence is that of Glucose-1-phosphate adenylyltransferase from Francisella tularensis subsp. holarctica (strain FTNF002-00 / FTA).